We begin with the raw amino-acid sequence, 810 residues long: Transducer protein CosT (810 aa).

The Cytoplasmic segment spans residues 1 to 38; sequence MSEPTADAGDNSPSSTDTAPLDRVKAIALLPLRSYLVK. Residues 39–59 traverse the membrane as a helical segment; it reads FAVALLVILVIIAAGGFWVQA. The Extracellular segment spans residues 60-323; that stretch reads DATATLEANT…AFALSNQIRT (264 aa). Residues 324–344 traverse the membrane as a helical segment; that stretch reads GILGFILVALVGVVLVGGTIG. Residues 345-397 enclose the HAMP 1 domain; sequence RNTAAAVQSLSAAAAEIEAGNYDVDVASSRRDEIGQLFASIGSMRDALVTQID. The Cytoplasmic portion of the chain corresponds to 345–810; that stretch reads RNTAAAVQSL…DRDVTPTQTD (466 aa). The tract at residues 403–427 is disordered; sequence REQATEAQQDAEAERERAEDARERA. The segment covering 414–427 has biased composition (basic and acidic residues); the sequence is EAERERAEDARERA. The region spanning 439–493 is the HAMP 2 domain; it reads AELEAQAERYSDVMAACADGDLTRRMPADDTDNEAMAAIAASFNEMLAQWEHTII. In terms of domain architecture, Methyl-accepting transducer spans 512-748; sequence GAADAERASG…EAVSMTEEVA (237 aa). 2 positions are modified to glutamate methyl ester (Glu): Glu556 and Glu739. Residues 751-784 form a disordered region; sequence SDSTAGEAQSVSAAAEEQAASMSEISDSVESLSG. The span at 755-774 shows a compositional bias: low complexity; sequence AGEAQSVSAAAEEQAASMSE. Positions 775-784 are enriched in polar residues; sequence ISDSVESLSG.

This sequence belongs to the methyl-accepting chemotaxis (MCP) protein family. Methylated by CheR.

It is found in the cell membrane. Mediates chemotaxis towards compatible osmolytes. Probably transduces the signal from the substrate-binding protein CosB to the histidine kinase CheA. The chain is Transducer protein CosT (cosT) from Halobacterium salinarum (strain ATCC 700922 / JCM 11081 / NRC-1) (Halobacterium halobium).